A 219-amino-acid polypeptide reads, in one-letter code: PKHD-type hydroxylase SYNPCC7002_A2658 (219 aa).

Residues 78–172 (TVHTLLFSRY…RLVAVGWVQS (95 aa)) form the Fe2OG dioxygenase domain. Residues His96, Asp98, and His153 each coordinate Fe cation. Residue Arg163 coordinates 2-oxoglutarate.

It depends on Fe(2+) as a cofactor. L-ascorbate is required as a cofactor.

This Picosynechococcus sp. (strain ATCC 27264 / PCC 7002 / PR-6) (Agmenellum quadruplicatum) protein is PKHD-type hydroxylase SYNPCC7002_A2658.